The following is a 568-amino-acid chain: Cytochrome P450 monooxygenase 41 (568 aa).

A helical membrane pass occupies residues 21–41 (LTSLVPLILSVMVCLIATVTI). Residues asparagine 321 and asparagine 377 are each glycosylated (N-linked (GlcNAc...) asparagine). Residue cysteine 514 participates in heme binding.

It belongs to the cytochrome P450 family. Heme serves as cofactor.

The protein localises to the membrane. Its pathway is secondary metabolite biosynthesis. Its function is as follows. Cytochrome P450 monooxygenase that is able to use 3,5-dimethoxy-trans-stilbene and 3,5,4'-trimethoxy-trans-stilbene as substrates for oxidation. The sequence is that of Cytochrome P450 monooxygenase 41 from Postia placenta (strain ATCC 44394 / Madison 698-R) (Brown rot fungus).